The following is a 494-amino-acid chain: NAD(P)H-quinone oxidoreductase subunit 2 B, chloroplastic (494 aa).

14 helical membrane-spanning segments follow: residues 13-33, 39-59, 81-101, 107-127, 131-151, 166-186, 211-231, 243-263, 277-297, 305-325, 336-356, 378-398, 411-433, and 468-488; these read SILP…IDLI, TPWL…ILLF, IFRL…IDYI, ALTE…FLCC, LVTI…LSGY, LLMG…LYGL, MFIS…LVPF, PTPV…ALAT, WHLL…FIAV, MLAY…IAAE, YMLI…LFGL, LSLV…GFFG, LYFL…LKII, and MIIC…IIAI.

The protein belongs to the complex I subunit 2 family. In terms of assembly, NDH is composed of at least 16 different subunits, 5 of which are encoded in the nucleus.

It is found in the plastid. It localises to the chloroplast thylakoid membrane. It catalyses the reaction a plastoquinone + NADH + (n+1) H(+)(in) = a plastoquinol + NAD(+) + n H(+)(out). The catalysed reaction is a plastoquinone + NADPH + (n+1) H(+)(in) = a plastoquinol + NADP(+) + n H(+)(out). Functionally, NDH shuttles electrons from NAD(P)H:plastoquinone, via FMN and iron-sulfur (Fe-S) centers, to quinones in the photosynthetic chain and possibly in a chloroplast respiratory chain. The immediate electron acceptor for the enzyme in this species is believed to be plastoquinone. Couples the redox reaction to proton translocation, and thus conserves the redox energy in a proton gradient. The polypeptide is NAD(P)H-quinone oxidoreductase subunit 2 B, chloroplastic (Angiopteris evecta (Mule's foot fern)).